The chain runs to 75 residues: Sec-independent protein translocase protein TatA (75 aa).

Residues 1–21 traverse the membrane as a helical segment; the sequence is MGSFSIWHWLIVLVIVALVFG. The tract at residues 44-75 is disordered; it reads KDANSDKPAEQVTQQKVADDTIDVQAKEKTNS.

The protein belongs to the TatA/E family. In terms of assembly, the Tat system comprises two distinct complexes: a TatABC complex, containing multiple copies of TatA, TatB and TatC subunits, and a separate TatA complex, containing only TatA subunits. Substrates initially bind to the TatABC complex, which probably triggers association of the separate TatA complex to form the active translocon.

The protein resides in the cell inner membrane. In terms of biological role, part of the twin-arginine translocation (Tat) system that transports large folded proteins containing a characteristic twin-arginine motif in their signal peptide across membranes. TatA could form the protein-conducting channel of the Tat system. This chain is Sec-independent protein translocase protein TatA, found in Bordetella petrii (strain ATCC BAA-461 / DSM 12804 / CCUG 43448).